We begin with the raw amino-acid sequence, 430 residues long: MKSIYSLVLCTALTAASPHPAFPQSPLGVPTTSSPSTGTFNSAEEVINASPFLSFHRDIVQIESISSNEHNVGEFIADFLRARNFTVIEQAVTSSSQRENQERFNVFAYPSSNTPEILITSHIDTVPPFIPYSLDTDSTTDNDPSTIRISGRGSVDAKGSVAAQIFAALDVLEQNPSAPLGLLFVVGEETGGDGMRAFSESSLNPAPSAFHTVIFGEPTELALVSGHKGMLGFEIVAKGHAAHSGYPWLGRSAISAVLPALSRVDQLGNIPADKGGLPSSPKYGNTTVNIGRVDAGVAANVVPATARADVAVRLAAGTPDEARDIVRRAVRDATDGNPDVYAEFNTRSEGYPPQDLDTDVDGFDITTVNYGTDVPNLQIHEREDGPVRRYLYGPGSIHVAHGDNEAITVGDLQEAVRGYRKLIEAALQRR.

Residues 1–16 form the signal peptide; sequence MKSIYSLVLCTALTAA. A glycan (N-linked (GlcNAc...) asparagine) is linked at N84. Zn(2+) is bound at residue D156. The active-site Proton acceptor is E188. Position 189 (E189) interacts with Zn(2+). N285 carries N-linked (GlcNAc...) asparagine glycosylation.

Belongs to the peptidase M20A family. It depends on Zn(2+) as a cofactor.

It is found in the secreted. This is Probable carboxypeptidase AFLA_037450 from Aspergillus flavus (strain ATCC 200026 / FGSC A1120 / IAM 13836 / NRRL 3357 / JCM 12722 / SRRC 167).